We begin with the raw amino-acid sequence, 129 residues long: Flagellar assembly factor FliW 2 (129 aa).

It belongs to the FliW family. As to quaternary structure, interacts with translational regulator CsrA and flagellin(s).

It localises to the cytoplasm. In terms of biological role, acts as an anti-CsrA protein, binds CsrA and prevents it from repressing translation of its target genes, one of which is flagellin. Binds to flagellin and participates in the assembly of the flagellum. The sequence is that of Flagellar assembly factor FliW 2 from Helicobacter pylori (strain HPAG1).